The sequence spans 379 residues: Wnt inhibitory factor 1 (379 aa).

Residues 1 to 28 (MARRSAFPAAALWLWSILLCLLALRAEA) form the signal peptide. The 140-residue stretch at 38 to 177 (LWIDAHQARV…PQNAIFFKTC (140 aa)) folds into the WIF domain. A glycan (N-linked (GlcNAc...) asparagine) is linked at N88. Intrachain disulfides connect C140-C177, C182-C192, C186-C198, C200-C209, C214-C224, C218-C230, and C232-C241. EGF-like domains lie at 178-210 (QQAE…PHCE), 211-242 (KALC…VNCD), 243-271 (KANC…LEGE), 274-306 (EISK…DLCS), and 307-338 (KPVC…RHCN). N-linked (GlcNAc...) asparagine glycosylation is present at N245. 8 disulfide bridges follow: C246-C256, C250-C262, C278-C288, C282-C294, C296-C305, C310-C320, C314-C326, and C328-C337. The segment at 354 to 379 (AQLRQHTPSLKKAEERRDPPESNYIW) is disordered. Basic and acidic residues predominate over residues 364–373 (KKAEERRDPP).

In terms of assembly, interacts with MYOC.

Its subcellular location is the secreted. In terms of biological role, binds to WNT proteins and inhibits their activities. May be involved in mesoderm segmentation. This is Wnt inhibitory factor 1 (WIF1) from Homo sapiens (Human).